The sequence spans 64 residues: Conotoxin VnMRCL-04 (64 aa).

A signal peptide spans 1 to 22; the sequence is MRCLPVFVILLLLIASAPSVDA. Residues 23–48 constitute a propeptide that is removed on maturation; that stretch reads RPKTKDDVPLASFHGNAERTLLNILR. At Trp-63 the chain carries Tryptophan amide.

This sequence belongs to the conotoxin T superfamily. Contains 2 disulfide bonds that can be either 'C1-C3, C2-C4' or 'C1-C4, C2-C3', since these disulfide connectivities have been observed for conotoxins with cysteine framework V (for examples, see AC P0DQQ7 and AC P81755). In terms of tissue distribution, expressed by the venom duct.

It is found in the secreted. The polypeptide is Conotoxin VnMRCL-04 (Conus ventricosus (Mediterranean cone)).